The sequence spans 248 residues: Lysine-rich arabinogalactan protein 19 (248 aa).

A signal peptide spans 1-24 (MESNSIIWSLLLASALISSFSVNA). A compositionally biased stretch (low complexity) spans 25 to 37 (QGPAASPVTSTTT). The tract at residues 25–221 (QGPAASPVTS…APSPNTNGGN (197 aa)) is disordered. Pro residues-rich tracts occupy residues 38–57 (APPPTTAAPPTTAAPPPTTT), 67–86 (PASPVTPPPAVTPTSPPAPK), and 94–171 (ATPP…PAPA). Residues 173–187 (TKHKRKHKHKRHHHA) show a composition bias toward basic residues. The segment covering 189–203 (APAPIPPSPPSPPVL) has biased composition (pro residues). A lipid anchor (GPI-anchor amidated serine) is attached at S196. Residues 197 to 248 (PPSPPVLTDPQDTAPAPSPNTNGGNALNQLKGRAVMWLNTGLVILFLLAMTA) constitute a propeptide, removed in mature form.

Belongs to the lysine-rich AGP family. In terms of processing, O-glycosylated on the hydroxyproline residues. Strongly expressed in stems, moderately expressed in flowers and roots and weakly expressed in young leaves.

It is found in the cell membrane. Functionally, proteoglycan that seems to be implicated in diverse developmental roles such as differentiation, cell-cell recognition, embryogenesis and programmed cell death. This chain is Lysine-rich arabinogalactan protein 19 (AGP19), found in Arabidopsis thaliana (Mouse-ear cress).